The following is a 529-amino-acid chain: Corneodesmosin (529 aa).

A signal peptide spans M1–A32. Disordered stretches follow at residues F38–G248 and G383–G492. Composition is skewed to low complexity over residues G58–S83, G90–G100, G111–A175, P189–P231, S392–S408, and P426–G441. N-linked (GlcNAc...) asparagine glycosylation is present at N172. Residues G449 to L467 show a composition bias toward polar residues.

Exclusively expressed in skin.

The protein localises to the secreted. Functionally, important for the epidermal barrier integrity. The protein is Corneodesmosin (CDSN) of Homo sapiens (Human).